Reading from the N-terminus, the 463-residue chain is tRNA-splicing endonuclease subunit Sen2 (463 aa).

Phosphoserine occurs at positions 32 and 147. The segment at H120 to H213 is disordered. 2 stretches are compositionally biased toward basic and acidic residues: residues P139–Q149 and S159–L170. Residues Y367 and H375 contribute to the active site. S406, S409, and S413 each carry phosphoserine. The active site involves K414.

It belongs to the tRNA-intron endonuclease family. In terms of assembly, tRNA splicing endonuclease is a heterotetramer composed of TSEN2, TSEN15, TSEN34/LENG5 and TSEN54. tRNA splicing endonuclease complex also contains proteins of the pre-mRNA 3'-end processing machinery such as CLP1, CPSF1, CPSF4 and CSTF2.

The protein resides in the nucleus. It localises to the nucleolus. The enzyme catalyses pretRNA = a 3'-half-tRNA molecule with a 5'-OH end + a 5'-half-tRNA molecule with a 2',3'-cyclic phosphate end + an intron with a 2',3'-cyclic phosphate and a 5'-hydroxyl terminus.. Functionally, constitutes one of the two catalytic subunit of the tRNA-splicing endonuclease complex, a complex responsible for identification and cleavage of the splice sites in pre-tRNA. It cleaves pre-tRNA at the 5'- and 3'-splice sites to release the intron. The products are an intron and two tRNA half-molecules bearing 2',3'-cyclic phosphate and 5'-OH termini. There are no conserved sequences at the splice sites, but the intron is invariably located at the same site in the gene, placing the splice sites an invariant distance from the constant structural features of the tRNA body. Probably carries the active site for 5'-splice site cleavage. The tRNA splicing endonuclease is also involved in mRNA processing via its association with pre-mRNA 3'-end processing factors, establishing a link between pre-tRNA splicing and pre-mRNA 3'-end formation, suggesting that the endonuclease subunits function in multiple RNA-processing events. This chain is tRNA-splicing endonuclease subunit Sen2 (Tsen2), found in Rattus norvegicus (Rat).